A 290-amino-acid chain; its full sequence is Glutamyl-Q tRNA(Asp) synthetase (290 aa).

L-glutamate contacts are provided by residues 9–13 (RFAPS) and E45. Positions 12–22 (PSPSGSLHFGS) match the 'HIGH' region motif. Residues C101, C103, Y115, and C119 each contribute to the Zn(2+) site. The L-glutamate site is built by Y170 and R188. The 'KMSKS' region motif lies at 226-230 (KLSKQ). K229 serves as a coordination point for ATP.

It belongs to the class-I aminoacyl-tRNA synthetase family. GluQ subfamily. Requires Zn(2+) as cofactor.

Functionally, catalyzes the tRNA-independent activation of glutamate in presence of ATP and the subsequent transfer of glutamate onto a tRNA(Asp). Glutamate is transferred on the 2-amino-5-(4,5-dihydroxy-2-cyclopenten-1-yl) moiety of the queuosine in the wobble position of the QUC anticodon. The polypeptide is Glutamyl-Q tRNA(Asp) synthetase (Shewanella amazonensis (strain ATCC BAA-1098 / SB2B)).